A 326-amino-acid chain; its full sequence is N-(2-amino-2-carboxyethyl)-L-glutamate synthase (326 aa).

Position 47 is an N6-(pyridoxal phosphate)lysine (Lys-47). Residues Asn-77, 185-189 (STTGS), and Ser-272 contribute to the pyridoxal 5'-phosphate site.

Belongs to the cysteine synthase/cystathionine beta-synthase family. SbnA subfamily. Homodimer. Pyridoxal 5'-phosphate is required as a cofactor.

The catalysed reaction is O-phospho-L-serine + L-glutamate = N-[(2S)-2-amino-2-carboxyethyl]-L-glutamate + phosphate + H(+). It participates in siderophore biosynthesis. In terms of biological role, catalyzes the synthesis of N-((2S)-2-amino-2-carboxyethyl)-L-glutamate (ACEGA) from O-phospho-L-serine and L-glutamate. Involved in the biosynthesis of L-2,3-diaminopropionic acid (L-Dap), a precursor of staphyloferrin B and antibiotics. The polypeptide is N-(2-amino-2-carboxyethyl)-L-glutamate synthase (sbnA) (Staphylococcus aureus (strain N315)).